Reading from the N-terminus, the 870-residue chain is Leucine--tRNA ligase (870 aa).

The short motif at 42–52 (PYPSGKLHMGH) is the 'HIGH' region element. The 'KMSKS' region motif lies at 629 to 633 (KMSKS). Lys632 is a binding site for ATP.

This sequence belongs to the class-I aminoacyl-tRNA synthetase family.

The protein localises to the cytoplasm. The catalysed reaction is tRNA(Leu) + L-leucine + ATP = L-leucyl-tRNA(Leu) + AMP + diphosphate. The protein is Leucine--tRNA ligase of Azotobacter vinelandii (strain DJ / ATCC BAA-1303).